Reading from the N-terminus, the 344-residue chain is Cell division protein ZipA (344 aa).

Topologically, residues 1-6 (MEDLQL) are periplasmic. Residues 7–27 (VLFVLGAIAIVAVLVHGFWSI) form a helical membrane-spanning segment. The Cytoplasmic portion of the chain corresponds to 28 to 344 (RRQQPKSLKD…DYLHRIRANA (317 aa)). Disordered stretches follow at residues 75-94 (VRKA…PYLK) and 108-139 (QFKQ…ASRQ).

The protein belongs to the ZipA family. Interacts with FtsZ via their C-terminal domains.

It is found in the cell inner membrane. Its function is as follows. Essential cell division protein that stabilizes the FtsZ protofilaments by cross-linking them and that serves as a cytoplasmic membrane anchor for the Z ring. Also required for the recruitment to the septal ring of downstream cell division proteins. The sequence is that of Cell division protein ZipA from Shewanella oneidensis (strain ATCC 700550 / JCM 31522 / CIP 106686 / LMG 19005 / NCIMB 14063 / MR-1).